Reading from the N-terminus, the 358-residue chain is Alanine racemase (358 aa).

The Proton acceptor; specific for D-alanine role is filled by Lys-34. The residue at position 34 (Lys-34) is an N6-(pyridoxal phosphate)lysine. Arg-130 serves as a coordination point for substrate. Tyr-254 serves as the catalytic Proton acceptor; specific for L-alanine. Met-302 is a substrate binding site.

This sequence belongs to the alanine racemase family. The cofactor is pyridoxal 5'-phosphate.

The catalysed reaction is L-alanine = D-alanine. It participates in amino-acid biosynthesis; D-alanine biosynthesis; D-alanine from L-alanine: step 1/1. Functionally, catalyzes the interconversion of L-alanine and D-alanine. May also act on other amino acids. This chain is Alanine racemase (alr), found in Stutzerimonas stutzeri (strain A1501) (Pseudomonas stutzeri).